A 185-amino-acid chain; its full sequence is NEDD8-conjugating enzyme UBE2F (185 aa).

The interval 1–29 is interaction with UBA3; sequence MLTLASKLKRDDGVRGPRASNPASDSTRR. The tract at residues 11–30 is disordered; that stretch reads DDGVRGPRASNPASDSTRRV. In terms of domain architecture, UBC core spans 32-185; sequence VRDKLLVKEV…VEDYIKRYAR (154 aa). Catalysis depends on Cys-116, which acts as the Glycyl thioester intermediate.

It belongs to the ubiquitin-conjugating enzyme family. UBE2F subfamily.

The catalysed reaction is [E1 NEDD8-activating enzyme]-S-[NEDD8 protein]-yl-L-cysteine + [E2 NEDD8-conjugating enzyme]-L-cysteine = [E1 NEDD8-activating enzyme]-L-cysteine + [E2 NEDD8-conjugating enzyme]-S-[NEDD8-protein]-yl-L-cysteine.. It functions in the pathway protein modification; protein neddylation. In terms of biological role, accepts the ubiquitin-like protein NEDD8 from the UBA3-NAE1 E1 complex and catalyzes its covalent attachment to other proteins. Together with the E3 ubiquitin ligase RNF7/RBX2, specifically neddylates cullin-5 (CUL5). Does not neddylate CUL1, CUL2, CUL3, CUL4A or CUL4B. This Gallus gallus (Chicken) protein is NEDD8-conjugating enzyme UBE2F (UBE2F).